Here is a 1724-residue protein sequence, read N- to C-terminus: MLKCIPLWRCNRHVESVDKRHCSLTAVPDEIYRYNRSLEELLLDANQLRELPKPFFRLHNLRKLGLSDNEIQKLPPDVANFTQLVELDISRNDISEIPENIKFCQSLEIADFSGNPLTRLPDGFTQLRGLAHLSLNDVSLQSLPNDIGNLSNLVTLELRENLLKSLPSSLSFLVKLEQLDLGSNVLEVLPDTLGALPNLRELWLDRNQLSSLPPELGNLRQLVCLDVSENRLSELPTEISGLIALTDLLLSENLLEILPDSIGSLKKLSILKVNQNRLVHLTDSIGECENLTELMLTENLLQSLPRSLGKLKKLTNLNVDRNRLSSVPAELGGCVSLNVLSLRDNRLGKLPPELANATELHVLDVAGNRLQNLPFALANLNLKAMWLAENQSQPMLKFQTEDDEQTGEKVLTCYLLPQQPSSSLENLLERSVDEAWPTDTNLNRVSVIQFRDDSKHEEEDDETAADKRGLQRRATPHPSELKVMKNVIEARRNEAYTARPDEDLESPDAEEKRLSGLSNQSHDSQASSSTTSATSHEDKQGINSTGVELNDGQVQEEEDLDEMEVEYTEPTVHFAEEPIIRGGDEDDDYDNDDDDAERSDEVSQTPSFPAEKQRLIRKDTPHYKKHFKITKLPKPETVAALLQGFSHDGLSPTAHTPENERDGEDDEEEEEDEDEEDDLHTPFQHRLDAAELEDIRMSQMNSSLQPVKGVSFDQVNNLLIEPARIEEEELTLSILRQTGGLGISIAGGKGSTPYKGDDEGIFISRVSEEGPAARAGVKVGDKLLEVNGVDLHGAEHHTAVEALRNSGAAVVMTVLRERMVEPENAITTTPLRPEDDYFPRERRSSGLPFLLDPDCPAVSTGPAQRLATCLIRNDKGLGFSIAGGKGSTLYRVGDTGIFISRIAEGGAAHRDNILQVGDRVISINGVDMTEARHDQAVALLTGTSPTITLVVDREQSSVGGASPRTRPHSPPPPEPSDSPEQEDGGDEHLGNHLNCPMEDEYPIEEVTLIKAGGPLGLSIVGGSDHASHPFGINEPGVFISKVIPNGLASQSGLRVGDRILEVNSIDLRHATHQEAVRALLSNKQEIRMLVRRDPSPPGMQEIVIHKQPGEKLGISIRGGAKGHAGNPFDPTDEGIFISKVSSNGAAARDGRLRVGMRILEVGNNSLLGMTHTEAVRVLRASGDSLVMLICDGFDPKSASTIEASPGVIANPFAAGIVRKNSMESISSVDRDLSPEEIDIMQKEVEMVRETSQWEREEMEKVSLSSGPLKLDYKTLAALPTTSLQKVNRASPSEPFRIDSPVRDAAHSPHNSQSNIHFPSNANTKDNASTKPGAIQPLSRVRPPVSPASQDGHSSPNPFQHGLSPINSQTTDLYSPRNNVSAKQPSPETPSPLGRHSPEQRSFKDRQKYFEIDVKQQTPDKPKPRISLVGEDDLKKMKEEEAKRIEQRAREFMLDEDEEEEEEDLAKQVAHMKAHGKVVLDGVEYKVESLGSPTSRQCATPPNYSATPPSHCGSSGPSSIDGKGDSQRNSVEDSFRLEQRPNSMTGLIPVYPGESAAPIRTAKAERRHQDRLRMQSPELTVALDKELSPAEKRALEAEKRAMWRAARMKSLEQDALKAQMVIAKSKEGKKRGTLDQLSESPSPAPTPSPTPMEDISPRTVTSPGRLSPGAADDVHFMDESSSNAVSVIDPEVPVAATSALEEMALYSNKRKLRQGRRSLEAPVPT.

The sufficient for targeting to adherens junction stretch occupies residues 1 to 821 (MLKCIPLWRC…MTVLRERMVE (821 aa)). LRR repeat units lie at residues 11–34 (NRHVESVDKRHCSLTAVPDEIYRY), 35–58 (NRSLEELLLDANQLRELPKPFFRL), 59–81 (HNLRKLGLSDNEIQKLPPDVANF), 83–105 (QLVELDISRNDISEIPENIKFCQ), 107–127 (LEIADFSGNPLTRLPDGFTQL), 128–150 (RGLAHLSLNDVSLQSLPNDIGNL), 151–174 (SNLVTLELRENLLKSLPSSLSFLV), 176–196 (LEQLDLGSNVLEVLPDTLGAL), 197–219 (PNLRELWLDRNQLSSLPPELGNL), 221–242 (QLVCLDVSENRLSELPTEISGL), 244–265 (ALTDLLLSENLLEILPDSIGSL), 266–288 (KKLSILKVNQNRLVHLTDSIGEC), 289–311 (ENLTELMLTENLLQSLPRSLGKL), 312–334 (KKLTNLNVDRNRLSSVPAELGGC), 336–357 (SLNVLSLRDNRLGKLPPELANA), 359–380 (ELHVLDVAGNRLQNLPFALANL), and 382–405 (LKAMWLAENQSQPMLKFQTEDDEQ). Disordered regions lie at residues 451-484 (RDDSKHEEEDDETAADKRGLQRRATPHPSELKVM), 496-620 (YTAR…RKDT), and 646-683 (SHDGLSPTAHTPENERDGEDDEEEEEDEDEEDDLHTPF). Residues 518-534 (SNQSHDSQASSSTTSAT) show a composition bias toward low complexity. The span at 554–567 (VQEEEDLDEMEVEY) shows a compositional bias: acidic residues. Positions 574–583 (FAEEPIIRGG) are enriched in basic and acidic residues. The span at 584-598 (DEDDDYDNDDDDAER) shows a compositional bias: acidic residues. Residues 611–620 (EKQRLIRKDT) show a composition bias toward basic and acidic residues. Positions 661-678 (RDGEDDEEEEEDEDEEDD) are enriched in acidic residues. PDZ domains are found at residues 731-818 (TLSI…LRER), 867-955 (ATCL…DREQ), 1005-1094 (EVTL…RRDP), and 1101-1193 (EIVI…CDGF). The segment at 955–995 (QSSVGGASPRTRPHSPPPPEPSDSPEQEDGGDEHLGNHLNC) is disordered. Disordered regions lie at residues 1283–1407 (LQKV…DRQK), 1414–1433 (KQQTPDKPKPRISLVGEDDL), 1449–1468 (REFMLDEDEEEEEEDLAKQV), and 1488–1555 (SLGS…GESA). A compositionally biased stretch (basic and acidic residues) spans 1295-1306 (FRIDSPVRDAAH). Polar residues-rich tracts occupy residues 1308–1329 (PHNSQSNIHFPSNANTKDNAST), 1346–1357 (PASQDGHSSPNP), and 1364–1385 (PINSQTTDLYSPRNNVSAKQPS). Over residues 1395 to 1407 (HSPEQRSFKDRQK) the composition is skewed to basic and acidic residues. Residues 1430–1461 (EDDLKKMKEEEAKRIEQRAREFMLDEDEEEEE) are a coiled coil. The segment covering 1453–1463 (LDEDEEEEEED) has biased composition (acidic residues). A compositionally biased stretch (polar residues) spans 1490-1506 (GSPTSRQCATPPNYSAT). Positions 1507-1518 (PPSHCGSSGPSS) are enriched in low complexity. The span at 1521-1538 (GKGDSQRNSVEDSFRLEQ) shows a compositional bias: basic and acidic residues. A Phosphoserine modification is found at S1609. Residues 1621–1684 (IAKSKEGKKR…FMDESSSNAV (64 aa)) are disordered. A compositionally biased stretch (basic and acidic residues) spans 1623–1632 (KSKEGKKRGT).

In terms of processing, palmitoylated.

It localises to the cell membrane. The protein resides in the cell junction. It is found in the adherens junction. The protein localises to the cell projection. Its subcellular location is the lamellipodium. It localises to the cytoplasm. The protein resides in the postsynapse. It is found in the presynapse. Scaffold protein involved in different aspects of polarized cells differentiation regulating epithelial and neuronal morphogenesis. Regulates the caudal migration of the nVII motor neurons. Required for convergent extension movements during gastrulation. This is Protein scribble homolog (scrib) from Danio rerio (Zebrafish).